Here is a 320-residue protein sequence, read N- to C-terminus: Eukaryotic translation initiation factor 3 subunit G (320 aa).

Positions 1 to 60 (MPTGDFDSKPSWADQVEEEGEDDKCVTSELLKGIPLPTGDTSPEPELLPGDPLPPPKEVI) are disordered. 2 positions are modified to phosphoserine: Ser8 and Ser11. Thr38 and Thr41 each carry phosphothreonine. A phosphoserine mark is found at Ser42, Ser189, Ser223, and Ser264. The interval 204 to 233 (QAAQSKTGKYVPPSLRDGASRRGESMQPNR) is disordered. Residues 221 to 233 (GASRRGESMQPNR) are compositionally biased toward basic and acidic residues. One can recognise an RRM domain in the interval 239–317 (ATIRVTNLSE…LILNVEWAKP (79 aa)).

The protein belongs to the eIF-3 subunit G family. Component of the eukaryotic translation initiation factor 3 (eIF-3) complex, which is composed of 13 subunits: EIF3A, EIF3B, EIF3C, EIF3D, EIF3E, EIF3F, EIF3G, EIF3H, EIF3I, EIF3J, EIF3K, EIF3L and EIF3M. The eIF-3 complex appears to include 3 stable modules: module A is composed of EIF3A, EIF3B, EIF3G and EIF3I; module B is composed of EIF3F, EIF3H, and EIF3M; and module C is composed of EIF3C, EIF3D, EIF3E, EIF3K and EIF3L. EIF3C of module C binds EIF3B of module A and EIF3H of module B, thereby linking the three modules. EIF3J is a labile subunit that binds to the eIF-3 complex via EIF3B. The eIF-3 complex may interact with RPS6KB1 under conditions of nutrient depletion. Mitogenic stimulation may lead to binding and activation of a complex composed of MTOR and RPTOR, leading to phosphorylation and release of RPS6KB1 and binding of EIF4B to eIF-3. Interacts (via C-terminus) with AIFM1 (via N-terminus). Interacts with DHX33; the interaction is independent of RNA. Phosphorylated. Phosphorylation is enhanced upon serum stimulation.

The protein resides in the cytoplasm. It is found in the nucleus. The protein localises to the perinuclear region. Its function is as follows. RNA-binding component of the eukaryotic translation initiation factor 3 (eIF-3) complex, which is required for several steps in the initiation of protein synthesis. The eIF-3 complex associates with the 40S ribosome and facilitates the recruitment of eIF-1, eIF-1A, eIF-2:GTP:methionyl-tRNAi and eIF-5 to form the 43S pre-initiation complex (43S PIC). The eIF-3 complex stimulates mRNA recruitment to the 43S PIC and scanning of the mRNA for AUG recognition. The eIF-3 complex is also required for disassembly and recycling of post-termination ribosomal complexes and subsequently prevents premature joining of the 40S and 60S ribosomal subunits prior to initiation. The eIF-3 complex specifically targets and initiates translation of a subset of mRNAs involved in cell proliferation, including cell cycling, differentiation and apoptosis, and uses different modes of RNA stem-loop binding to exert either translational activation or repression. This subunit can bind 18S rRNA. The sequence is that of Eukaryotic translation initiation factor 3 subunit G (Eif3g) from Mus musculus (Mouse).